The following is a 140-amino-acid chain: Natriuretic peptides A (140 aa).

A signal peptide spans 1 to 24 (MDTRGSFSCGFLLLLLIQLQPSRA). Residues 25-111 (NPIYNLSPAK…KRLRGVQMPR (87 aa)) constitute a propeptide that is removed on maturation. Residues 55–94 (ALESNPDLQEPQTQEEIPPELTDDSDEQKAEPKLASNTPL) are disordered. The segment covering 71-80 (IPPELTDDSD) has biased composition (acidic residues). The cysteines at positions 118 and 134 are disulfide-linked.

It belongs to the natriuretic peptide family. Cleaved by CORIN upon secretion to produce the functional hormone.

Its subcellular location is the secreted. Functionally, hormone playing a key role in cardiovascular homeostasis through regulation of natriuresis, diuresis, and vasodilation. Specifically binds and stimulates the cGMP production of the NPR1 receptor. Binds the clearance receptor NPR3. This Gallus gallus (Chicken) protein is Natriuretic peptides A (NPPA).